Reading from the N-terminus, the 347-residue chain is tRNA pseudouridine synthase D (347 aa).

Aspartate 81 (nucleophile) is an active-site residue. One can recognise a TRUD domain in the interval 158–304; it reads GVPNYFGNQR…MRHDRRAIAL (147 aa).

Belongs to the pseudouridine synthase TruD family.

It carries out the reaction uridine(13) in tRNA = pseudouridine(13) in tRNA. Its function is as follows. Responsible for synthesis of pseudouridine from uracil-13 in transfer RNAs. This is tRNA pseudouridine synthase D from Vibrio vulnificus (strain YJ016).